The following is a 981-amino-acid chain: Rab3 GTPase-activating protein catalytic subunit (981 aa).

S83, S379, S536, S579, S581, and S590 each carry phosphoserine. The disordered stretch occupies residues 532 to 558; sequence GKKTSLSDSTTSAYPGDAGKTGGQLGL. A disordered region spans residues 591-614; that stretch reads DTEDLKGNGQESGKKGGPKEMANL. The residue at position 664 (S664) is a Phosphoserine.

This sequence belongs to the Rab3-GAP catalytic subunit family. As to quaternary structure, the Rab3 GTPase-activating complex is a heterodimer composed of Rab3gap1 and Rab3gap2. The Rab3 GTPase-activating complex interacts with DMXL2. Interacts with LMAN1. In the eye, it is highly expressed within the lens, particularly in the anterior lens epithelium and in a ring corresponding to the equatorial region where anterior cells are differentiating into lens fibers. Also highly expressed in the retina.

Its subcellular location is the cytoplasm. It is found in the endoplasmic reticulum. It localises to the golgi apparatus. The protein localises to the cis-Golgi network. Its function is as follows. Catalytic subunit of the Rab3 GTPase-activating (Rab3GAP) complex composed of RAB3GAP1 and RAB3GAP2, which has GTPase-activating protein (GAP) activity towards various Rab3 subfamily members (RAB3A, RAB3B, RAB3C and RAB3D), RAB5A and RAB43, and guanine nucleotide exchange factor (GEF) activity towards RAB18. As part of the Rab3GAP complex, acts as a GAP for Rab3 proteins by converting active RAB3-GTP to the inactive form RAB3-GDP. Rab3 proteins are involved in regulated exocytosis of neurotransmitters and hormones. The Rab3GAP complex, acts as a GEF for RAB18 by promoting the conversion of inactive RAB18-GDP to the active form RAB18-GTP. Recruits and stabilizes RAB18 at the cis-Golgi membrane where RAB18 is most likely activated. Also involved in RAB18 recruitment at the endoplasmic reticulum (ER) membrane where it maintains proper ER structure. Required for normal eye and brain development. May participate in neurodevelopmental processes such as proliferation, migration and differentiation before synapse formation, and non-synaptic vesicular release of neurotransmitters. The sequence is that of Rab3 GTPase-activating protein catalytic subunit from Mus musculus (Mouse).